A 68-amino-acid chain; its full sequence is MASLKKSLFLVLFLGFVSLSICEEEKREDKEDEGENEEAEENHEERSEEKRFLPLLASLVGGLLGKRS.

A signal peptide spans 1 to 22 (MASLKKSLFLVLFLGFVSLSIC). A propeptide spanning residues 23-51 (EEEKREDKEDEGENEEAEENHEERSEEKR) is cleaved from the precursor. The tract at residues 24–50 (EEKREDKEDEGENEEAEENHEERSEEK) is disordered. Residues 30-42 (KEDEGENEEAEEN) show a composition bias toward acidic residues. Leu64 is subject to Leucine amide. A propeptide is located at residue Ser68.

The protein belongs to the frog skin active peptide (FSAP) family. Brevinin subfamily. Expressed by the skin glands.

The protein resides in the secreted. This Litoria fallax (Eastern dwarf tree frog) protein is Preprofallaxidin-5.